Consider the following 581-residue polypeptide: Kelch-like protein 38 (581 aa).

The BTB domain occupies 34 to 101 (TDVSICSGAW…VYTGEVHISA (68 aa)). In terms of domain architecture, BACK spans 136–237 (CLGLVRLAEI…HPAFFHHFIA (102 aa)). Kelch repeat units lie at residues 285–332 (FLLL…TLHR), 334–383 (VYVL…THRN), 384–431 (FIFS…VKDQ), 433–479 (LYLF…VLGE), 480–521 (QIVI…VMGN), and 523–573 (LYVT…TLQC).

The sequence is that of Kelch-like protein 38 (Klhl38) from Mus musculus (Mouse).